A 75-amino-acid chain; its full sequence is UPF0270 protein PST_1436 (75 aa).

It belongs to the UPF0270 family.

The sequence is that of UPF0270 protein PST_1436 from Stutzerimonas stutzeri (strain A1501) (Pseudomonas stutzeri).